A 368-amino-acid chain; its full sequence is Flagellar P-ring protein (368 aa).

An N-terminal signal peptide occupies residues 1 to 24 (MDKPMKRIFVVLVILLVLPQLALA).

Belongs to the FlgI family. In terms of assembly, the basal body constitutes a major portion of the flagellar organelle and consists of four rings (L,P,S, and M) mounted on a central rod.

Its subcellular location is the periplasm. The protein resides in the bacterial flagellum basal body. In terms of biological role, assembles around the rod to form the L-ring and probably protects the motor/basal body from shearing forces during rotation. The chain is Flagellar P-ring protein from Geobacter sulfurreducens (strain ATCC 51573 / DSM 12127 / PCA).